The primary structure comprises 148 residues: Phosphopantetheine adenylyltransferase (148 aa).

The protein belongs to the eukaryotic CoaD family.

The protein resides in the cytoplasm. The enzyme catalyses (R)-4'-phosphopantetheine + ATP + H(+) = 3'-dephospho-CoA + diphosphate. It participates in cofactor biosynthesis; coenzyme A biosynthesis. Reversibly transfers an adenylyl group from ATP to 4'-phosphopantetheine, yielding dephospho-CoA (dPCoA) and pyrophosphate. This chain is Phosphopantetheine adenylyltransferase, found in Archaeoglobus fulgidus (strain ATCC 49558 / DSM 4304 / JCM 9628 / NBRC 100126 / VC-16).